The following is a 156-amino-acid chain: Snaclec alboaggregin-B subunit alpha (156 aa).

The first 23 residues, 1 to 23 (MGRFIFVSFGLLVVFLSLSGTGA), serve as a signal peptide directing secretion. Positions 24 to 151 (DCPSDWSSFK…CEQKHIFMCK (128 aa)) constitute a C-type lectin domain. 3 disulfides stabilise this stretch: C25-C36, C53-C150, and C125-C142.

The protein belongs to the snaclec family. As to quaternary structure, heterodimer of subunits alpha and beta; disulfide-linked. As to expression, expressed by the venom gland.

Its subcellular location is the secreted. Its function is as follows. Weakly agglutinates platelets at high doses by binding to GPIbalpha (GP1BA). This Trimeresurus albolabris (White-lipped pit viper) protein is Snaclec alboaggregin-B subunit alpha.